The following is a 279-amino-acid chain: MGTIKIVTDSSITIEPELIKALDITVVPLSVMIDSKLYSDNDLKEEGHFLSLMKASKSLPKTSQPPVGLFAETYENLVKKGVTDIVAIHLSPALSGTIEASRQGAEIAEAPVTVLDSGFTDQAMKFQVVEAAKMAKAGASLNEILAAVQAIKSKTELYIGVSTLENLVKGGRIGRVTGVLSSLLNVKVVMALKNDELKTLVKGRGNKTFTKWLDSYLAKNSHRPIAEIAISYAGEASLALTLKERIAAYYNHSISVLETGSIIQTHTGEGAFAVMVRYE.

In terms of domain architecture, DegV spans 4–278 (IKIVTDSSIT…EGAFAVMVRY (275 aa)). Hexadecanoate-binding residues include T62 and S95.

In terms of biological role, may bind long-chain fatty acids, such as palmitate, and may play a role in lipid transport or fatty acid metabolism. The sequence is that of DegV domain-containing protein M6_Spy1246 from Streptococcus pyogenes serotype M6 (strain ATCC BAA-946 / MGAS10394).